The sequence spans 185 residues: ATP synthase subunit delta (185 aa).

Belongs to the ATPase delta chain family. F-type ATPases have 2 components, F(1) - the catalytic core - and F(0) - the membrane proton channel. F(1) has five subunits: alpha(3), beta(3), gamma(1), delta(1), epsilon(1). CF(0) has four main subunits: a(1), b(1), b'(1) and c(10-14). The alpha and beta chains form an alternating ring which encloses part of the gamma chain. F(1) is attached to F(0) by a central stalk formed by the gamma and epsilon chains, while a peripheral stalk is formed by the delta, b and b' chains.

It localises to the cellular thylakoid membrane. In terms of biological role, f(1)F(0) ATP synthase produces ATP from ADP in the presence of a proton or sodium gradient. F-type ATPases consist of two structural domains, F(1) containing the extramembraneous catalytic core and F(0) containing the membrane proton channel, linked together by a central stalk and a peripheral stalk. During catalysis, ATP synthesis in the catalytic domain of F(1) is coupled via a rotary mechanism of the central stalk subunits to proton translocation. Functionally, this protein is part of the stalk that links CF(0) to CF(1). It either transmits conformational changes from CF(0) to CF(1) or is implicated in proton conduction. In Crocosphaera subtropica (strain ATCC 51142 / BH68) (Cyanothece sp. (strain ATCC 51142)), this protein is ATP synthase subunit delta.